The chain runs to 348 residues: Rhodopsin (348 aa).

Met1 is modified (N-acetylmethionine). The Extracellular segment spans residues 1–36; it reads MNGTEGPNFYVPFSNATGVVRSPFEYPQYYLAEPWQ. Residues Asn2 and Asn15 are each glycosylated (N-linked (GlcNAc...) asparagine). The helical transmembrane segment at 37-61 threads the bilayer; the sequence is FSMLAAYMFLLIVLGFPINFLTLYV. The Cytoplasmic segment spans residues 62 to 73; the sequence is TVQHKKLRTPLN. Residues 74–96 form a helical membrane-spanning segment; it reads YILLNLAVADLFMVFGGFTTTLY. Topologically, residues 97-110 are extracellular; sequence TSLHGYFVFGPTGC. Residues Cys110 and Cys187 are joined by a disulfide bond. Residues 111-133 form a helical membrane-spanning segment; sequence NLEGFFATLGGEIALWSLVVLAI. The 'Ionic lock' involved in activated form stabilization motif lies at 134–136; sequence ERY. Residues 134 to 152 are Cytoplasmic-facing; the sequence is ERYVVICKPMSNFRFGENH. Residues 153-173 form a helical membrane-spanning segment; sequence AIMGVVFTWIMALACAAPPLV. The Extracellular segment spans residues 174–202; the sequence is GWSRYIPEGMQCSCGVDYYTLKPEVNNES. Residue Glu201 participates in Zn(2+) binding. Residues 203–224 form a helical membrane-spanning segment; the sequence is FVIYMFVVHFTIPLIVIFFCYG. Over 225-252 the chain is Cytoplasmic; the sequence is QLVFTVKEAAAQQQESATTQKAEKEVTR. The chain crosses the membrane as a helical span at residues 253 to 274; the sequence is MVILMVVFFLICWFPYAGVAFY. Over 275–286 the chain is Extracellular; the sequence is IFTHQGSNFGPI. Residue Gln279 participates in Zn(2+) binding. Residues 287 to 308 traverse the membrane as a helical segment; the sequence is FMTLPAFFAKSSSIYNPVIYIM. Lys296 bears the N6-(retinylidene)lysine mark. The Cytoplasmic portion of the chain corresponds to 309–348; that stretch reads MNKQFRNCMLTTLCCGKNILGDDEASATASKTETSQVAPA. 2 S-palmitoyl cysteine lipidation sites follow: Cys322 and Cys323. The interaction with SAG stretch occupies residues 330–348; it reads DDEASATASKTETSQVAPA. Ser334 is subject to Phosphoserine. A Phosphothreonine modification is found at Thr336. Ser338 is subject to Phosphoserine. Residues Thr340 and Thr342 each carry the phosphothreonine modification. Ser343 bears the Phosphoserine mark.

It belongs to the G-protein coupled receptor 1 family. Opsin subfamily. As to quaternary structure, homodimer. May form a complex composed of RHO, GRK1 and RCVRN in a Ca(2+)-dependent manner; RCVRN prevents the interaction between GRK1 and RHO. Interacts with GRK1. Interacts (phosphorylated form) with SAG. Interacts with GNAT1. Interacts with GNAT3. SAG and G-proteins compete for a common binding site. Interacts with PRCD; the interaction promotes PRCD stability. Forms a complex with ASAP1 and ARF4. Forms a complex with ASAP1, RAB11A, Rabin8/RAB3IP, ARF4 and RAB11FIP3; the complex regulates Golgi-to-cilia rhodopsin/RHO transport in photoreceptors. Phosphorylated on some or all of the serine and threonine residues present in the C-terminal region. Post-translationally, contains one covalently linked retinal chromophore. Upon light absorption, the covalently bound 11-cis-retinal is converted to all-trans-retinal. After hydrolysis of the Schiff base and release of the covalently bound all-trans-retinal, active rhodopsin is regenerated by binding of a fresh molecule of 11-cis-retinal.

The protein localises to the membrane. It is found in the cell projection. Its subcellular location is the cilium. The protein resides in the photoreceptor outer segment. Its function is as follows. Photoreceptor required for image-forming vision at low light intensity. Required for photoreceptor cell viability after birth. Light-induced isomerization of 11-cis to all-trans retinal triggers a conformational change that activates signaling via G-proteins. Subsequent receptor phosphorylation mediates displacement of the bound G-protein alpha subunit by the arrestin SAG and terminates signaling. The sequence is that of Rhodopsin (RHO) from Cricetulus griseus (Chinese hamster).